The following is a 330-amino-acid chain: Reaction center protein M chain (330 aa).

3 consecutive transmembrane segments (helical) span residues 57 to 83, 115 to 144, and 147 to 172; these read GWTSIVAFGTGIAWFVIVGFNMLAQVG, GGWYIIASFFLLVSVMTWLLRAYLLAEQHK, and KHIFWGFAAAVWLFLVLGLFRPILMG. The (7R,8Z)-bacteriochlorophyll b site is built by histidine 185 and histidine 205. Residues 202–230 traverse the membrane as a helical segment; that stretch reads NPFHCLSIVFLYGSVLLFCMHGGTILAVT. Residues histidine 222 and glutamate 237 each coordinate Fe cation. Tryptophan 255 contacts a ubiquinone. A helical transmembrane segment spans residues 264–290; it reads TMEGIHRWAWWFAVLTPITGGIGILLT. Residue histidine 269 coordinates Fe cation.

Belongs to the reaction center PufL/M/PsbA/D family. Reaction center is composed of four bacteriochlorophylls, two bacteriopheophytins, two ubiquinones, one iron, and two highly hydrophobic polypeptide chains (designated L and M).

Its subcellular location is the cellular chromatophore membrane. In terms of biological role, the reaction center is a membrane-bound complex that mediates the initial photochemical event in the electron transfer process of photosynthesis. In Roseobacter denitrificans (strain ATCC 33942 / OCh 114) (Erythrobacter sp. (strain OCh 114)), this protein is Reaction center protein M chain (pufM).